We begin with the raw amino-acid sequence, 590 residues long: L-fucose isomerase (590 aa).

Residues glutamate 337 and aspartate 361 each act as proton acceptor in the active site. Mn(2+)-binding residues include glutamate 337, aspartate 361, and histidine 528.

Belongs to the L-fucose isomerase family. Requires Mn(2+) as cofactor.

The protein resides in the cytoplasm. The catalysed reaction is L-fucose = L-fuculose. It functions in the pathway carbohydrate degradation; L-fucose degradation; L-lactaldehyde and glycerone phosphate from L-fucose: step 1/3. Its function is as follows. Converts the aldose L-fucose into the corresponding ketose L-fuculose. This is L-fucose isomerase from Bacteroides fragilis (strain ATCC 25285 / DSM 2151 / CCUG 4856 / JCM 11019 / LMG 10263 / NCTC 9343 / Onslow / VPI 2553 / EN-2).